A 491-amino-acid chain; its full sequence is Cobyric acid synthase (491 aa).

Residues 253–429 (AHRVAVVRLP…WHGSLEGDAL (177 aa)) enclose the GATase cobBQ-type domain. Cys-334 acts as the Nucleophile in catalysis. His-421 is an active-site residue.

Belongs to the CobB/CobQ family. CobQ subfamily.

It functions in the pathway cofactor biosynthesis; adenosylcobalamin biosynthesis. In terms of biological role, catalyzes amidations at positions B, D, E, and G on adenosylcobyrinic A,C-diamide. NH(2) groups are provided by glutamine, and one molecule of ATP is hydrogenolyzed for each amidation. The sequence is that of Cobyric acid synthase from Mycobacterium ulcerans (strain Agy99).